A 219-amino-acid polypeptide reads, in one-letter code: Biofilm-associated metzincin protease inhibitor (219 aa).

A helical transmembrane segment spans residues 4–24 (TWIYAASAAAIGGALIGGWLL). Positions 191–204 (DIAARSDPHGDHVD) are enriched in basic and acidic residues. The disordered stretch occupies residues 191–219 (DIAARSDPHGDHVDAPLAELPPMPPPAQG). Residues 209–219 (ELPPMPPPAQG) are compositionally biased toward pro residues.

The protein localises to the cell membrane. Its function is as follows. Inhibitor of the metalloendopeptidase Mep72. Forms a protein-protein complex with the protease, which is the product of its coregulated adjacent gene, and probably prevents premature protease activity until the protein has been secreted. The sequence is that of Biofilm-associated metzincin protease inhibitor from Pseudomonas aeruginosa (strain ATCC 15692 / DSM 22644 / CIP 104116 / JCM 14847 / LMG 12228 / 1C / PRS 101 / PAO1).